A 140-amino-acid chain; its full sequence is Large ribosomal subunit protein uL14 (140 aa).

Belongs to the universal ribosomal protein uL14 family. As to quaternary structure, part of the 50S ribosomal subunit. Forms a cluster with proteins L3 and L24e, part of which may contact the 16S rRNA in 2 intersubunit bridges.

Functionally, binds to 23S rRNA. Forms part of two intersubunit bridges in the 70S ribosome. In Aeropyrum pernix (strain ATCC 700893 / DSM 11879 / JCM 9820 / NBRC 100138 / K1), this protein is Large ribosomal subunit protein uL14.